We begin with the raw amino-acid sequence, 224 residues long: LRP chaperone MESD (224 aa).

The first 29 residues, 1 to 29, serve as a signal peptide directing secretion; the sequence is MAASRWLRAVLLFLCASDLLLLPPPNAYA. The chaperone domain stretch occupies residues 1–155; it reads MAASRWLRAV…DRAIFMLRDG (155 aa). Disordered stretches follow at residues 28-49 and 178-224; these read YAADTPGEATPPPRKKKDIRDY and GQMY…REDL. Positions 156-195 are escort domain; sequence SYAWEIKDFLVSQDRCAEVTLEGQMYPGKGGGSKEKNKTK. Over residues 187-224 the composition is skewed to basic and acidic residues; that stretch reads GSKEKNKTKPEKAKKKEGDPKPRASKEDNRAGSRREDL. A glycan (N-linked (GlcNAc...) asparagine) is linked at Asn-192. Positions 221–224 match the Prevents secretion from ER motif; it reads REDL.

This sequence belongs to the MESD family. Monomer. Interacts with LRP5; the interaction prevents LRP5 from forming aggregates and chaperones LRP6 to the plasma membrane. Interacts with LRP6; the interaction prevents LRP6 from forming aggregates and chaperones LRP6 to the plasma membrane. Interacts with LRP4; the interaction promotes glycosylation of LRP4 and its cell-surface expression. Expressed in many tissues, but not in skeletal muscles. In the retina expressed in retinal ganglion cells, inner and outer plexiform layers, photoreceptor inner and outer segments and retinal pigment epithelium (at protein level).

The protein localises to the endoplasmic reticulum. Its function is as follows. Chaperone specifically assisting the folding of beta-propeller/EGF modules within the family of low-density lipoprotein receptors (LDLRs). Acts as a modulator of the Wnt pathway through chaperoning the coreceptors of the canonical Wnt pathway, LRP5 and LRP6, to the plasma membrane. Essential for specification of embryonic polarity and mesoderm induction. Plays an essential role in neuromuscular junction (NMJ) formation by promoting cell-surface expression of LRP4. May regulate phagocytosis of apoptotic retinal pigment epithelium (RPE) cells. The sequence is that of LRP chaperone MESD from Mus musculus (Mouse).